A 272-amino-acid polypeptide reads, in one-letter code: Small ribosomal subunit protein uS2 (272 aa).

The interval 238–272 is disordered; it reads ASKEEQTEEAEEETLSSKYREQDFQEAKSGARGEK. The segment covering 255–272 has biased composition (basic and acidic residues); sequence KYREQDFQEAKSGARGEK.

The protein belongs to the universal ribosomal protein uS2 family.

This is Small ribosomal subunit protein uS2 from Protochlamydia amoebophila (strain UWE25).